The chain runs to 858 residues: Protein translocase subunit SecA (858 aa).

ATP is bound by residues glutamine 85, 103–107 (GEGKT), and aspartate 511. Cysteine 840, cysteine 842, cysteine 851, and cysteine 852 together coordinate Zn(2+).

This sequence belongs to the SecA family. Monomer and homodimer. Part of the essential Sec protein translocation apparatus which comprises SecA, SecYEG and auxiliary proteins SecDF. Other proteins may also be involved. Zn(2+) serves as cofactor.

It is found in the cell membrane. The protein resides in the cytoplasm. It carries out the reaction ATP + H2O + cellular proteinSide 1 = ADP + phosphate + cellular proteinSide 2.. Its function is as follows. Part of the Sec protein translocase complex. Interacts with the SecYEG preprotein conducting channel. Has a central role in coupling the hydrolysis of ATP to the transfer of proteins into and across the cell membrane, serving as an ATP-driven molecular motor driving the stepwise translocation of polypeptide chains across the membrane. This Lachnoclostridium phytofermentans (strain ATCC 700394 / DSM 18823 / ISDg) (Clostridium phytofermentans) protein is Protein translocase subunit SecA.